A 160-amino-acid chain; its full sequence is Cytochrome b6-f complex subunit 4 (160 aa).

A run of 3 helical transmembrane segments spans residues 36-56 (LLYIFPVVILGTIACIVGLAV), 95-115 (LLGIALQTLVPLGLMLVPFIE), and 131-151 (TVFLFGTVTTIYLGIGAALPI).

The protein belongs to the cytochrome b family. PetD subfamily. In terms of assembly, the 4 large subunits of the cytochrome b6-f complex are cytochrome b6, subunit IV (17 kDa polypeptide, PetD), cytochrome f and the Rieske protein, while the 4 small subunits are PetG, PetL, PetM and PetN. The complex functions as a dimer.

It localises to the cellular thylakoid membrane. Functionally, component of the cytochrome b6-f complex, which mediates electron transfer between photosystem II (PSII) and photosystem I (PSI), cyclic electron flow around PSI, and state transitions. The chain is Cytochrome b6-f complex subunit 4 from Parasynechococcus marenigrum (strain WH8102).